Here is a 617-residue protein sequence, read N- to C-terminus: Cell pattern formation-associated protein STUA (617 aa).

The tract at residues 1–79 (MNQPAADMYY…PASQMGQNVL (79 aa)) is disordered. Over residues 24-34 (TVTSGAMSYHS) the composition is skewed to polar residues. The span at 45 to 58 (PQYAPQPQYSQYGY) shows a compositional bias: low complexity. Residues 61 to 76 (GLTSPQSAQPASQMGQ) are compositionally biased toward polar residues. An HTH APSES-type domain is found at 106-212 (RVTATLWEDE…HNIGALLYHP (107 aa)). Residues 140–161 (GTKLLNVAGMTRGRRDGILKSE) constitute a DNA-binding region (H-T-H motif). Disordered regions lie at residues 223-274 (AAAE…MGRP), 300-451 (SDSG…DSGA), and 463-617 (APAV…PRRR). 2 stretches are compositionally biased toward low complexity: residues 305 to 318 (QWAQGQGMGSAQGA) and 334 to 345 (PATPASTPPGTT). 2 stretches are compositionally biased toward polar residues: residues 346–361 (IQNMQSYQSGAQQYDN) and 368–382 (PSAQQSPYQATNPAS). The span at 438–447 (EHDHDAEYTH) shows a compositional bias: basic and acidic residues. The span at 488-509 (PASGRATPRTAAAPQPYYSQQA) shows a compositional bias: low complexity. Composition is skewed to polar residues over residues 519 to 533 (QQPSSNLYNVMSNDR) and 553 to 563 (SMSNGYASQMN). A nuclear localization domain region spans residues 569–593 (KRGRDEDDDLQRPSSGGGMDLKRRK). Positions 599–617 (QVPAMAYAPPVMAQQPRRR) are enriched in low complexity.

The protein belongs to the EFG1/PHD1/stuA family.

The protein resides in the nucleus. Its function is as follows. Transcription factor that regulates asexual reproduction. Binds the StuA-response elements (StRE) with the consensus sequence 5'-(A/T)CGCG(T/A)N(A/C)-3' at the promoters of target genes. Required for the formation of aerial hyphae, efficient conidiation, and the formation of perithecia. Essential for the generation of normal turgor pressure within the appressorium. Required for infection of intact apple fruit and penetration of onion epidermal cells. In Colletotrichum gloeosporioides (Anthracnose fungus), this protein is Cell pattern formation-associated protein STUA.